The chain runs to 451 residues: Probable D-serine dehydratase (451 aa).

Lysine 119 carries the post-translational modification N6-(pyridoxal phosphate)lysine.

This sequence belongs to the serine/threonine dehydratase family. DsdA subfamily. The cofactor is pyridoxal 5'-phosphate.

It catalyses the reaction D-serine = pyruvate + NH4(+). The sequence is that of Probable D-serine dehydratase from Acidovorax ebreus (strain TPSY) (Diaphorobacter sp. (strain TPSY)).